Reading from the N-terminus, the 176-residue chain is Inner membrane protein p54 (176 aa).

Residues 32–52 (YTILIAIVVLIIIIIVLIYLF) traverse the membrane as a helical segment. The interval 82 to 176 (VTPQPGIAKP…YTHKDLENSL (95 aa)) is disordered. Positions 123–154 (GMAAGGPAAASAPAHPAELYTTATTQNTASQT) are enriched in low complexity. The interval 142 to 154 (YTTATTQNTASQT) is interaction with host DYNLL1.

The protein belongs to the asfivirus envelope protein p54 family. Interacts with the host light chain cytoplasmic dynein DYNLL1; this interaction is critical for intracellular microtubule-dependent virus transport toward viral factories.

Its subcellular location is the virion membrane. The protein resides in the host cytoplasm. It localises to the host cytoskeleton. The protein localises to the host endoplasmic reticulum membrane. Its function is as follows. Inner envelope protein involved, through its interaction with host dynein, in the intracellular microtubule-dependent transport of viral capsid toward viral factories. Seems to induce caspase-3 activation and apoptosis. Plays a role in virion morphogenesis by recruiting and transforming the host ER membranes into the precursors of the viral envelope. Involved in virus attachment to the host cell. The chain is Inner membrane protein p54 from African swine fever virus (isolate Tick/Malawi/Lil 20-1/1983) (ASFV).